The primary structure comprises 235 residues: Phosphoribosylaminoimidazole-succinocarboxamide synthase (235 aa).

The protein belongs to the SAICAR synthetase family.

It carries out the reaction 5-amino-1-(5-phospho-D-ribosyl)imidazole-4-carboxylate + L-aspartate + ATP = (2S)-2-[5-amino-1-(5-phospho-beta-D-ribosyl)imidazole-4-carboxamido]succinate + ADP + phosphate + 2 H(+). It functions in the pathway purine metabolism; IMP biosynthesis via de novo pathway; 5-amino-1-(5-phospho-D-ribosyl)imidazole-4-carboxamide from 5-amino-1-(5-phospho-D-ribosyl)imidazole-4-carboxylate: step 1/2. In Streptococcus pneumoniae serotype 2 (strain D39 / NCTC 7466), this protein is Phosphoribosylaminoimidazole-succinocarboxamide synthase.